A 298-amino-acid polypeptide reads, in one-letter code: Bifunctional protein FolD (298 aa).

Residues 165 to 167 (GRS), S190, and I231 each bind NADP(+).

The protein belongs to the tetrahydrofolate dehydrogenase/cyclohydrolase family. In terms of assembly, homodimer.

The enzyme catalyses (6R)-5,10-methylene-5,6,7,8-tetrahydrofolate + NADP(+) = (6R)-5,10-methenyltetrahydrofolate + NADPH. It catalyses the reaction (6R)-5,10-methenyltetrahydrofolate + H2O = (6R)-10-formyltetrahydrofolate + H(+). Its pathway is one-carbon metabolism; tetrahydrofolate interconversion. Functionally, catalyzes the oxidation of 5,10-methylenetetrahydrofolate to 5,10-methenyltetrahydrofolate and then the hydrolysis of 5,10-methenyltetrahydrofolate to 10-formyltetrahydrofolate. This chain is Bifunctional protein FolD, found in Prochlorococcus marinus (strain MIT 9301).